A 310-amino-acid polypeptide reads, in one-letter code: Atrochrysone carboxyl ACP thioesterase CPUR_05436 (310 aa).

Positions 105, 107, 109, and 110 each coordinate Zn(2+). The Proton donor/acceptor role is filled by D109.

Belongs to the metallo-beta-lactamase superfamily. Zn(2+) serves as cofactor.

The catalysed reaction is atrochrysone carboxyl-[ACP] + H2O = atrochrysone carboxylate + holo-[ACP] + H(+). Its pathway is pigment biosynthesis. Its function is as follows. Atrochrysone carboxyl ACP thioesterase; part of the ergochrome gene cluster responsible for the typical purple-black color of the ergot sclerotia. The ergochrome gene cluster produces several ergot pigments including the yellow ergochrome secalonic acid and its derivatives, as well as the red anthraquinones endocrocin and clavorubin. The pathway begins with the synthesis of atrochrysone thioester by the polyketide synthase (PKS) CPUR_05437. The atrochrysone carboxyl ACP thioesterase CPUR_05436 then breaks the thioester bond and releases the atrochrysone carboxylic acid from CPUR_05437. The atrochrysone carboxylic acid is then converted to atrochrysone which is further transformed into emodin anthrone. The next step is performed by the anthrone oxygenase CPUR_05434 that catalyzes the oxidation of emodinanthrone to emodin. Emodin is further modified to yield monodictyphenone via several steps involving CPUR_05427, CPUR_05428, CPUR_05429 and CPUR_05430. The short chain dehydrogenase/reductase CPUR_05418 then catalyzes the C-5 ketoreduction to give the xanthone skeleton of the monomeric units. Ergochromes formation requires further dimerization steps of different xanthone units, probably catalyzed by the cytochrome P450 monooxygenase CPUR_05419. CPUR_05425, CPUR_05426 and CPUR_05431 are unique to Claviceps, thus it is likely that they are involved in further modification of xanthone units or in their dimerization. The yellow ergochromes and the red anthraquinone pigments endocrocin and clavorubin are products from the same PKS derived precursors and the latter are likely shunt products in the pathway of xanthone biosynthesis. It is proposed that atrochrysone carboxylic acid released from the PKS CPUR_05437 can also be converted to endocrocin anthrone which is further oxidized into endocrocin by CPUR_05435. Endocrocin could be then modified to clavorubin, possibly by CPUR_05423 and CPUR_05431. Clavorubin is the principal anthraquinone metabolite produced by the cluster with a much higher yield compared to endocrocin. The chain is Atrochrysone carboxyl ACP thioesterase CPUR_05436 from Claviceps purpurea (strain 20.1) (Ergot fungus).